The chain runs to 381 residues: Cytochrome b (381 aa).

4 consecutive transmembrane segments (helical) span residues 34 to 54, 78 to 99, 114 to 134, and 179 to 199; these read FGSL…FLAM, WLIR…YLHI, WNIG…GYVL, and FFAF…LHFL. 2 residues coordinate heme b: His-84 and His-98. Residues His-183 and His-197 each contribute to the heme b site. Residue His-202 participates in a ubiquinone binding. Transmembrane regions (helical) follow at residues 227-247, 289-309, 321-341, and 348-368; these read YKDI…VLFL, LGGV…PFLH, LTQL…WIGG, and FIFI…IITP.

This sequence belongs to the cytochrome b family. As to quaternary structure, the cytochrome bc1 complex contains 3 respiratory subunits (MT-CYB, CYC1 and UQCRFS1), 2 core proteins (UQCRC1 and UQCRC2) and probably 6 low-molecular weight proteins. It depends on heme b as a cofactor.

It is found in the mitochondrion inner membrane. Component of the ubiquinol-cytochrome c reductase complex (complex III or cytochrome b-c1 complex) that is part of the mitochondrial respiratory chain. The b-c1 complex mediates electron transfer from ubiquinol to cytochrome c. Contributes to the generation of a proton gradient across the mitochondrial membrane that is then used for ATP synthesis. This Heterodontus francisci (Horn shark) protein is Cytochrome b (mt-cyb).